Here is a 715-residue protein sequence, read N- to C-terminus: Phosphoribosylformylglycinamidine synthase subunit PurL (715 aa).

The active site involves His33. ATP is bound at residue Tyr36. A Mg(2+)-binding site is contributed by Glu77. Substrate contacts are provided by residues 78-81 and Arg100; that span reads SHNH. His79 functions as the Proton acceptor in the catalytic mechanism. A Mg(2+)-binding site is contributed by Asp101. Residue Gln225 coordinates substrate. Position 253 (Asp253) interacts with Mg(2+). 297-299 contacts substrate; that stretch reads ESQ. Residues Asn475 and Gly512 each contribute to the ATP site. Asn513 contributes to the Mg(2+) binding site. Ser515 is a substrate binding site.

The protein belongs to the FGAMS family. Monomer. Part of the FGAM synthase complex composed of 1 PurL, 1 PurQ and 2 PurS subunits.

The protein resides in the cytoplasm. It carries out the reaction N(2)-formyl-N(1)-(5-phospho-beta-D-ribosyl)glycinamide + L-glutamine + ATP + H2O = 2-formamido-N(1)-(5-O-phospho-beta-D-ribosyl)acetamidine + L-glutamate + ADP + phosphate + H(+). The protein operates within purine metabolism; IMP biosynthesis via de novo pathway; 5-amino-1-(5-phospho-D-ribosyl)imidazole from N(2)-formyl-N(1)-(5-phospho-D-ribosyl)glycinamide: step 1/2. Functionally, part of the phosphoribosylformylglycinamidine synthase complex involved in the purines biosynthetic pathway. Catalyzes the ATP-dependent conversion of formylglycinamide ribonucleotide (FGAR) and glutamine to yield formylglycinamidine ribonucleotide (FGAM) and glutamate. The FGAM synthase complex is composed of three subunits. PurQ produces an ammonia molecule by converting glutamine to glutamate. PurL transfers the ammonia molecule to FGAR to form FGAM in an ATP-dependent manner. PurS interacts with PurQ and PurL and is thought to assist in the transfer of the ammonia molecule from PurQ to PurL. The chain is Phosphoribosylformylglycinamidine synthase subunit PurL from Methanosarcina acetivorans (strain ATCC 35395 / DSM 2834 / JCM 12185 / C2A).